A 355-amino-acid chain; its full sequence is Putative GPI-anchor transamidase (355 aa).

Residues 1–24 form the signal peptide; the sequence is MFNIMLVKFVVIFALILASCRVEA. Catalysis depends on residues His-165 and Cys-207.

Belongs to the peptidase C13 family.

The protein operates within glycolipid biosynthesis; glycosylphosphatidylinositol-anchor biosynthesis. Its function is as follows. Mediates GPI anchoring in the endoplasmic reticulum, by replacing a protein's C-terminal GPI attachment signal peptide with a pre-assembled GPI. During this transamidation reaction, the GPI transamidase forms a carbonyl intermediate with the substrate protein. The protein is Putative GPI-anchor transamidase of Drosophila melanogaster (Fruit fly).